A 428-amino-acid polypeptide reads, in one-letter code: Ammonium transporter AmtB (428 aa).

Residues 1 to 22 (MKIATIKTGLASLAMLPGLVMA) form the signal peptide. Over 23–32 (APAVADKADN) the chain is Periplasmic. A helical transmembrane segment spans residues 33–54 (AFMMICTALVLFMTIPGIALFY). Topologically, residues 55–65 (GGLIRGKNVLS) are cytoplasmic. Residues 66-90 (MLTQVTVTFALVCILWVVYGYSLAF) traverse the membrane as a helical segment. Over 91 to 119 (GEGNNFFGNINWLMLKNIELTAVMGSIYQ) the chain is Periplasmic. Residues 120-142 (YIHVAFQGSFACITVGLIVGALA) form a helical membrane-spanning segment. Residues 143–146 (ERIR) lie on the Cytoplasmic side of the membrane. The helical transmembrane segment at 147-171 (FSAVLIFVVVWLTLSYIPIAHMVWG) threads the bilayer. The Periplasmic segment spans residues 172–185 (GGLLASHGALDFAG). The helical transmembrane segment at 186–201 (GTVVHINAAIAGLVGA) threads the bilayer. Residues 202-221 (YLIGKRVGFGKEAFKPHNLP) are Cytoplasmic-facing. A helical membrane pass occupies residues 222-241 (MVFTGTAILYIGWFGFNAGS). Ser241 is an NH4(+) binding site. At 242–248 (AGTANEI) the chain is on the periplasmic side. The helical transmembrane segment at 249-273 (AALAFVNTVVATAAAILGWIFGEWA) threads the bilayer. The Cytoplasmic portion of the chain corresponds to 274-279 (LRGKPS). A helical transmembrane segment spans residues 280 to 300 (LLGACSGAIAGLVGVTPACGY). Residues 301–302 (IG) are Periplasmic-facing. Residues 303–321 (VGGALIIGVVAGLAGLWGV) form a helical membrane-spanning segment. Over 322 to 333 (TMLKRLLRVDDP) the chain is Cytoplasmic. A helical transmembrane segment spans residues 334-355 (CDVFGVHGVCGIVGCIMTGIFA). Residues 356-370 (ASSLGGVGFAEGVTM) are Periplasmic-facing. A helical transmembrane segment spans residues 371-399 (GHQLLVQLESIAITIVWSGVVAFIGYKLA). Topologically, residues 400–428 (DLTVGLRVPEEQEREGLDVNSHGENAYNA) are cytoplasmic.

This sequence belongs to the ammonia transporter channel (TC 1.A.11.2) family. In terms of assembly, homotrimer. In response to elevation of the extracellular ammonium concentration, interacts and forms a complex with GlnK.

It localises to the cell inner membrane. With respect to regulation, in the presence of high extracellular ammonium concentrations, transport activity is inhibited by interaction with the regulatory protein GlnK. Formation of the GlnK-AmtB complex is influenced by intracellular pools of the effector molecules ATP, ADP, Mg(2+) and 2-oxoglutarate. The GlnK-AmtB interaction is also controlled by the level of intracellular glutamine and the uridylylation status of GlnK. Functionally, involved in the uptake of ammonium/ammonia (NH(4)(+)/NH(3)). Transport is electrogenic. Following sequestration of NH(4)(+) at the periplasmic face, NH(4)(+) is deprotonated and neutral NH(3) is transported into the cytoplasm. Neutral NH(3) and charged H(+) are carried separately across the membrane on a unique two-lane pathway, before recombining to NH(4)(+) inside the cell. This Escherichia coli O157:H7 protein is Ammonium transporter AmtB (amtB).